We begin with the raw amino-acid sequence, 213 residues long: Orotate phosphoribosyltransferase (213 aa).

Lysine 26 contacts 5-phospho-alpha-D-ribose 1-diphosphate. 34–35 (FF) is an orotate binding site. 5-phospho-alpha-D-ribose 1-diphosphate-binding positions include 72–73 (YK), arginine 99, lysine 100, lysine 103, histidine 105, and 124–132 (DDVITAGTA). Residues threonine 128 and arginine 156 each coordinate orotate.

This sequence belongs to the purine/pyrimidine phosphoribosyltransferase family. PyrE subfamily. In terms of assembly, homodimer. Mg(2+) is required as a cofactor.

The catalysed reaction is orotidine 5'-phosphate + diphosphate = orotate + 5-phospho-alpha-D-ribose 1-diphosphate. It functions in the pathway pyrimidine metabolism; UMP biosynthesis via de novo pathway; UMP from orotate: step 1/2. Its function is as follows. Catalyzes the transfer of a ribosyl phosphate group from 5-phosphoribose 1-diphosphate to orotate, leading to the formation of orotidine monophosphate (OMP). The protein is Orotate phosphoribosyltransferase of Alteromonas mediterranea (strain DSM 17117 / CIP 110805 / LMG 28347 / Deep ecotype).